A 565-amino-acid chain; its full sequence is DNA primase (565 aa).

The CHC2-type zinc finger occupies 37–61 (CPFHSETNPSFYVHPGLKIYHCFGC). The 82-residue stretch at 248–329 (GFFVITEGYF…NVLVATPSPY (82 aa)) folds into the Toprim domain. Positions 254, 298, and 300 each coordinate Mg(2+).

The protein belongs to the DnaG primase family. As to quaternary structure, monomer. Interacts with DnaB. Zn(2+) serves as cofactor. Mg(2+) is required as a cofactor.

It carries out the reaction ssDNA + n NTP = ssDNA/pppN(pN)n-1 hybrid + (n-1) diphosphate.. Functionally, RNA polymerase that catalyzes the synthesis of short RNA molecules used as primers for DNA polymerase during DNA replication. This chain is DNA primase, found in Thermotoga maritima (strain ATCC 43589 / DSM 3109 / JCM 10099 / NBRC 100826 / MSB8).